The sequence spans 132 residues: Small ribosomal subunit protein uS8 (132 aa).

This sequence belongs to the universal ribosomal protein uS8 family. In terms of assembly, part of the 30S ribosomal subunit. Contacts proteins S5 and S12.

In terms of biological role, one of the primary rRNA binding proteins, it binds directly to 16S rRNA central domain where it helps coordinate assembly of the platform of the 30S subunit. This Bradyrhizobium sp. (strain BTAi1 / ATCC BAA-1182) protein is Small ribosomal subunit protein uS8.